Here is a 223-residue protein sequence, read N- to C-terminus: Transcriptional regulator HMO1 (223 aa).

Disordered stretches follow at residues 69–89 (IEAT…APKK) and 165–223 (DGSA…HGSP). Over residues 70 to 86 (EATESKKKRKQEKDPNA) the composition is skewed to basic and acidic residues. Positions 87 to 160 (PKKPLTMFFQ…IYNIEKKKYE (74 aa)) form a DNA-binding region, HMG box. Over residues 204 to 223 (KKKKKTEKKEKKKKSGHGSP) the composition is skewed to basic residues.

It is found in the nucleus. Transcription factor that binds upstream of hexose and ergosterol metabolism, as well as cell cycle genes. Activates pseudohyphal growth. The chain is Transcriptional regulator HMO1 (HMO1) from Candida albicans (strain SC5314 / ATCC MYA-2876) (Yeast).